The chain runs to 150 residues: Endoribonuclease YbeY (150 aa).

Zn(2+) is bound by residues His115, His119, and His125.

Belongs to the endoribonuclease YbeY family. Zn(2+) serves as cofactor.

Its subcellular location is the cytoplasm. Its function is as follows. Single strand-specific metallo-endoribonuclease involved in late-stage 70S ribosome quality control and in maturation of the 3' terminus of the 16S rRNA. The protein is Endoribonuclease YbeY of Aquifex aeolicus (strain VF5).